Consider the following 203-residue polypeptide: ATP-dependent Clp protease proteolytic subunit 1 (203 aa).

Residue Ser101 is the Nucleophile of the active site. His126 is an active-site residue.

It belongs to the peptidase S14 family. As to quaternary structure, fourteen ClpP subunits assemble into 2 heptameric rings which stack back to back to give a disk-like structure with a central cavity, resembling the structure of eukaryotic proteasomes.

The protein resides in the cytoplasm. It catalyses the reaction Hydrolysis of proteins to small peptides in the presence of ATP and magnesium. alpha-casein is the usual test substrate. In the absence of ATP, only oligopeptides shorter than five residues are hydrolyzed (such as succinyl-Leu-Tyr-|-NHMec, and Leu-Tyr-Leu-|-Tyr-Trp, in which cleavage of the -Tyr-|-Leu- and -Tyr-|-Trp bonds also occurs).. Functionally, cleaves peptides in various proteins in a process that requires ATP hydrolysis. Has a chymotrypsin-like activity. Plays a major role in the degradation of misfolded proteins. The polypeptide is ATP-dependent Clp protease proteolytic subunit 1 (Synechococcus sp. (strain JA-3-3Ab) (Cyanobacteria bacterium Yellowstone A-Prime)).